The primary structure comprises 385 residues: Trans-enoyl reductase poxH (385 aa).

Residue 64–67 coordinates NADP(+); the sequence is QPYS. Position 156–163 (156–163) interacts with substrate; sequence PDPAAPPI. Residues 199–202, 223–226, tyrosine 241, and 289–290 each bind NADP(+); these read STSV, SGTD, and LG. 309 to 313 is a binding site for substrate; that stretch reads HMAPL. 372 to 373 serves as a coordination point for NADP(+); the sequence is KR.

This sequence belongs to the zinc-containing alcohol dehydrogenase family. Monomer.

The protein operates within secondary metabolite biosynthesis. Its function is as follows. Trans-enoyl reductase; part of the gene cluster that mediates the biosynthesis of oxaleimides, cytotoxic compounds containing an unusual disubstituted succinimide moiety. The first step of the pathway is provided by the HR-PKS poxF that serves in a new mode of collaborative biosynthesis with the PKS-NRPS poxE, by providing the olefin containing amino acid substrate via the synthesis of an ACP-bound dec-4-enoate. The cytochrome P450 monooxygenase poxM-catalyzed oxidation at the alpha-position creates the enzyme-bound 2-hydroxydec-4-enoyl-ACP thioester, which may be prone to spontaneous hydrolysis to yield 2-hydroxydec-4-enoic acid due to increased electrophilicity of the carbonyl. 2-hydroxydec-4-enoic acid can then be further oxidized by poxM to yield the alpha-ketoacid 2-oxodec-4-enoicacid, which is reductively aminated by the aminotransferase poxL to yield (S,E)-2-aminodec-4-enoic acid. The Hybrid PKS-NRPS synthetase poxE then performs condensation between the octaketide product of its PKS modules and the amino group of (S,E)-2-aminodec-4-enoic acid which is activated and incorporated by the adenylation domain. The resulting aminoacyl product can be cyclized by the Diels-Alderase PoxQ and reductively released by the reductive (R) domain of poxE to yield an aldehyde intermediate. The released aldehyde is then substrate for a Knoevenagel condensation by the hydrolyase poxO followed by an oxidation at the 5-position of the pyrrolidone ring. The presence of the olefin from the amino acid building block allows for migration of the substituted allyl group to occur. This allylic transposition reaction takes place in a conjugate addition, semipinacol-like fashion to yield a succinimide intermediate. Iterative two-electron oxidations of the C7 methyl of the succinimide intermediate to the carboxylic acid can be catalyzed by one of two remaining cytochrome P450 monooxygenasess poxC or poxD to yield oxaleimide A. Subsequent oxidation yields the maleimide scaffold oxaleimide I. Both oxaleimide A and oxaleimide I can undergo oxidative modifications in the decalin ring to yield the series of products oxaleimides B to H. This chain is Trans-enoyl reductase poxH, found in Penicillium oxalicum (strain 114-2 / CGMCC 5302) (Penicillium decumbens).